The following is a 492-amino-acid chain: Protein nucleotidyltransferase YdiU (492 aa).

Gly-91, Gly-93, Arg-94, Lys-114, Asp-126, Gly-127, Arg-180, and Arg-187 together coordinate ATP. The active-site Proton acceptor is Asp-256. Asn-257 and Asp-266 together coordinate Mg(2+). Asp-266 is an ATP binding site.

Belongs to the SELO family. Requires Mg(2+) as cofactor. Mn(2+) is required as a cofactor.

The enzyme catalyses L-seryl-[protein] + ATP = 3-O-(5'-adenylyl)-L-seryl-[protein] + diphosphate. The catalysed reaction is L-threonyl-[protein] + ATP = 3-O-(5'-adenylyl)-L-threonyl-[protein] + diphosphate. It catalyses the reaction L-tyrosyl-[protein] + ATP = O-(5'-adenylyl)-L-tyrosyl-[protein] + diphosphate. It carries out the reaction L-histidyl-[protein] + UTP = N(tele)-(5'-uridylyl)-L-histidyl-[protein] + diphosphate. The enzyme catalyses L-seryl-[protein] + UTP = O-(5'-uridylyl)-L-seryl-[protein] + diphosphate. The catalysed reaction is L-tyrosyl-[protein] + UTP = O-(5'-uridylyl)-L-tyrosyl-[protein] + diphosphate. Nucleotidyltransferase involved in the post-translational modification of proteins. It can catalyze the addition of adenosine monophosphate (AMP) or uridine monophosphate (UMP) to a protein, resulting in modifications known as AMPylation and UMPylation. In Synechococcus sp. (strain ATCC 27144 / PCC 6301 / SAUG 1402/1) (Anacystis nidulans), this protein is Protein nucleotidyltransferase YdiU.